The following is a 555-amino-acid chain: Formate--tetrahydrofolate ligase (555 aa).

ATP is bound at residue 64–71 (TPAGEGKT).

Belongs to the formate--tetrahydrofolate ligase family.

The enzyme catalyses (6S)-5,6,7,8-tetrahydrofolate + formate + ATP = (6R)-10-formyltetrahydrofolate + ADP + phosphate. It functions in the pathway one-carbon metabolism; tetrahydrofolate interconversion. In Dinoroseobacter shibae (strain DSM 16493 / NCIMB 14021 / DFL 12), this protein is Formate--tetrahydrofolate ligase.